A 159-amino-acid polypeptide reads, in one-letter code: Ribosomal RNA large subunit methyltransferase H (159 aa).

S-adenosyl-L-methionine contacts are provided by residues Gly-108 and 127 to 132 (FGKLTM).

It belongs to the RNA methyltransferase RlmH family. In terms of assembly, homodimer.

The protein localises to the cytoplasm. It catalyses the reaction pseudouridine(1915) in 23S rRNA + S-adenosyl-L-methionine = N(3)-methylpseudouridine(1915) in 23S rRNA + S-adenosyl-L-homocysteine + H(+). In terms of biological role, specifically methylates the pseudouridine at position 1915 (m3Psi1915) in 23S rRNA. The polypeptide is Ribosomal RNA large subunit methyltransferase H (Lactobacillus helveticus (strain DPC 4571)).